Reading from the N-terminus, the 353-residue chain is tRNA N6-adenosine threonylcarbamoyltransferase (353 aa).

Fe cation contacts are provided by His-111 and His-115. Substrate is bound by residues 134–138 (LVSGG), Asp-167, Gly-180, Asp-184, and Asn-279. A Fe cation-binding site is contributed by Asp-307.

This sequence belongs to the KAE1 / TsaD family. The cofactor is Fe(2+).

The protein localises to the cytoplasm. The enzyme catalyses L-threonylcarbamoyladenylate + adenosine(37) in tRNA = N(6)-L-threonylcarbamoyladenosine(37) in tRNA + AMP + H(+). Required for the formation of a threonylcarbamoyl group on adenosine at position 37 (t(6)A37) in tRNAs that read codons beginning with adenine. Is involved in the transfer of the threonylcarbamoyl moiety of threonylcarbamoyl-AMP (TC-AMP) to the N6 group of A37, together with TsaE and TsaB. TsaD likely plays a direct catalytic role in this reaction. This is tRNA N6-adenosine threonylcarbamoyltransferase from Thermosynechococcus vestitus (strain NIES-2133 / IAM M-273 / BP-1).